Here is a 270-residue protein sequence, read N- to C-terminus: Abhydrolase domain-containing protein C22H12.03 (270 aa).

Residues 21–257 (PPVLIFHGLL…CGHWVHFEKP (237 aa)) enclose the AB hydrolase-1 domain. Catalysis depends on charge relay system residues Ser95, Glu190, and His250.

It belongs to the AB hydrolase superfamily.

Its subcellular location is the mitochondrion. This chain is Abhydrolase domain-containing protein C22H12.03, found in Schizosaccharomyces pombe (strain 972 / ATCC 24843) (Fission yeast).